A 735-amino-acid polypeptide reads, in one-letter code: Post-transcriptional regulator MKT1 (735 aa).

An interaction with PBP1 region spans residues 475–722 (QVIYNTMEET…ANERMKRAQK (248 aa)).

This sequence belongs to the XPG/RAD2 endonuclease family. Forms a complex composed of at least MKT1, PBP1, XAC1 and LSM12. Within the complex, interacts (via C-terminus) with PBP1; the interaction is direct. Interacts with RNA-binding protein ZC3H11 (via MKT1-binding motif); the interaction is direct. May interact with RNA-binding proteins CFB1 and CFB2. Interacts with the EIF4E6-EIF4G5 translation initiation complex via EIF4G5; the interaction with EIF4G5 is direct.

It localises to the cytoplasm. It is found in the cytosol. The protein resides in the stress granule. Functionally, involved in post-transcriptional regulation of gene expression. Promotes mRNA stabilization by recruiting a complex containing PBP1, LSM12 and XAC1 to mRNAs. Recruited to mRNAs by sequence-specific RNA binding proteins. May regulate translation through interactions with the EIF4E6-EIF4G5 translation initiation complex. This Trypanosoma brucei brucei (strain 927/4 GUTat10.1) protein is Post-transcriptional regulator MKT1.